A 244-amino-acid polypeptide reads, in one-letter code: Ubiquitin carboxyl-terminal hydrolase mug105 (244 aa).

The Nucleophile role is filled by Cys42. The active-site Proton acceptor is His165. The active site involves Asp183.

It belongs to the peptidase C78 family. ZUFSP subfamily.

It is found in the cytoplasm. The catalysed reaction is Thiol-dependent hydrolysis of ester, thioester, amide, peptide and isopeptide bonds formed by the C-terminal Gly of ubiquitin (a 76-residue protein attached to proteins as an intracellular targeting signal).. Its function is as follows. Deubiquitinase with endodeubiquitinase activity that preferentially cleaves 'Lys-48'-linked polyubiquitin chains. Shows only weak activity against 'Lys-63' and 'Lys-11'-linked chains. Has a role in meiosis. This Schizosaccharomyces pombe (strain 972 / ATCC 24843) (Fission yeast) protein is Ubiquitin carboxyl-terminal hydrolase mug105 (mug105).